The primary structure comprises 85 residues: UPF0335 protein BQ12070 (85 aa).

It belongs to the UPF0335 family.

This chain is UPF0335 protein BQ12070, found in Bartonella quintana (strain Toulouse) (Rochalimaea quintana).